The sequence spans 293 residues: Urease accessory protein UreD (293 aa).

The protein belongs to the UreD family. In terms of assembly, ureD, UreF and UreG form a complex that acts as a GTP-hydrolysis-dependent molecular chaperone, activating the urease apoprotein by helping to assemble the nickel containing metallocenter of UreC. The UreE protein probably delivers the nickel.

It is found in the cytoplasm. Required for maturation of urease via the functional incorporation of the urease nickel metallocenter. This chain is Urease accessory protein UreD, found in Cupriavidus metallidurans (strain ATCC 43123 / DSM 2839 / NBRC 102507 / CH34) (Ralstonia metallidurans).